A 210-amino-acid chain; its full sequence is Mitochondrial cardiolipin hydrolase (210 aa).

Residues 1–6 (MLLWGR) are Mitochondrial intermembrane-facing. The helical transmembrane segment at 7–24 (WKVVAGLAGLALSLELLL) threads the bilayer. Topologically, residues 25–210 (RYMRRRKPIR…YDFFPEKENK (186 aa)) are cytoplasmic. A PLD phosphodiesterase domain is found at 138–165 (SSGYMHHKFAVVDGTVVLTGSLNWTVQA). Residues His-143, Lys-145, and Asp-150 contribute to the active site.

The protein belongs to the phospholipase D family. MitoPLD/Zucchini subfamily. Homodimer.

Its subcellular location is the mitochondrion outer membrane. The enzyme catalyses a cardiolipin + H2O = a 1,2-diacyl-sn-glycero-3-phospho-(1'-sn-glycerol) + a 1,2-diacyl-sn-glycero-3-phosphate + H(+). Its function is as follows. Presents phospholipase and nuclease activities, depending on the different physiological conditions. Plays a key role in mitochondrial fusion and fission via its phospholipase activity. In its phospholipase role, it uses the mitochondrial lipid cardiolipin as substrate to generate phosphatidate (PA or 1,2-diacyl-sn-glycero-3-phosphate), a second messenger signaling lipid. Production of PA facilitates Mitofusin-mediated fusion, whereas the cleavage of PA by the Lipin family of phosphatases produces diacylgycerol (DAG) which promotes mitochondrial fission. Regulates mitochondrial shape through facilitating mitochondrial fusion. During spermatogenesis, plays a critical role in PIWI-interacting RNA (piRNA) biogenesis. piRNAs provide essential protection against the activity of mobile genetic elements. piRNA-mediated transposon silencing is thus critical for maintaining genome stability, in particular in germline cells when transposons are mobilized as a consequence of wide-spread genomic demethylation. Has been shown to be a backbone-non-specific, single strand-specific nuclease, cleaving either RNA or DNA substrates with similar affinity. Produces 5' phosphate and 3' hydroxyl termini, suggesting it could directly participate in the processing of primary piRNA transcripts. Has been proposed to act as a cardiolipin hydrolase to generate phosphatidic acid at mitochondrial surface. Although it cannot be excluded that it can act as a phospholipase in some circumstances, this activity could not be confirmed. The sequence is that of Mitochondrial cardiolipin hydrolase (pld6) from Xenopus tropicalis (Western clawed frog).